We begin with the raw amino-acid sequence, 322 residues long: tRNA-dihydrouridine(16) synthase (322 aa).

FMN-binding positions include 7 to 9 (PME) and Q68. C98 (proton donor) is an active-site residue. FMN is bound by residues K139, 200–202 (NGE), and 224–225 (CR).

Belongs to the Dus family. DusC subfamily. The cofactor is FMN.

The catalysed reaction is 5,6-dihydrouridine(16) in tRNA + NADP(+) = uridine(16) in tRNA + NADPH + H(+). It catalyses the reaction 5,6-dihydrouridine(16) in tRNA + NAD(+) = uridine(16) in tRNA + NADH + H(+). Catalyzes the synthesis of 5,6-dihydrouridine (D), a modified base found in the D-loop of most tRNAs, via the reduction of the C5-C6 double bond in target uridines. Specifically modifies U16 in tRNAs. The polypeptide is tRNA-dihydrouridine(16) synthase (Vibrio parahaemolyticus serotype O3:K6 (strain RIMD 2210633)).